A 61-amino-acid chain; its full sequence is Small ribosomal subunit protein uS14B (61 aa).

Residues C24, C27, C40, and C43 each contribute to the Zn(2+) site.

This sequence belongs to the universal ribosomal protein uS14 family. Zinc-binding uS14 subfamily. As to quaternary structure, part of the 30S ribosomal subunit. Contacts proteins S3 and S10. Requires Zn(2+) as cofactor.

Functionally, binds 16S rRNA, required for the assembly of 30S particles and may also be responsible for determining the conformation of the 16S rRNA at the A site. The polypeptide is Small ribosomal subunit protein uS14B (Streptomyces avermitilis (strain ATCC 31267 / DSM 46492 / JCM 5070 / NBRC 14893 / NCIMB 12804 / NRRL 8165 / MA-4680)).